The following is a 251-amino-acid chain: DNA repair protein RecO (251 aa).

The protein belongs to the RecO family.

Functionally, involved in DNA repair and RecF pathway recombination. The protein is DNA repair protein RecO of Lactococcus lactis subsp. cremoris (strain MG1363).